The sequence spans 410 residues: Arginine deiminase (410 aa).

Residue cysteine 399 is the Amidino-cysteine intermediate of the active site.

This sequence belongs to the arginine deiminase family.

The protein resides in the cytoplasm. The catalysed reaction is L-arginine + H2O = L-citrulline + NH4(+). It functions in the pathway amino-acid degradation; L-arginine degradation via ADI pathway; carbamoyl phosphate from L-arginine: step 1/2. The chain is Arginine deiminase from Listeria monocytogenes serovar 1/2a (strain ATCC BAA-679 / EGD-e).